We begin with the raw amino-acid sequence, 189 residues long: Probable chorismate pyruvate-lyase (189 aa).

Residues Arg-74, Leu-113, and Glu-175 each contribute to the substrate site.

This sequence belongs to the UbiC family.

Its subcellular location is the cytoplasm. It catalyses the reaction chorismate = 4-hydroxybenzoate + pyruvate. It functions in the pathway cofactor biosynthesis; ubiquinone biosynthesis. Its function is as follows. Removes the pyruvyl group from chorismate, with concomitant aromatization of the ring, to provide 4-hydroxybenzoate (4HB) for the ubiquinone pathway. The polypeptide is Probable chorismate pyruvate-lyase (Azoarcus sp. (strain BH72)).